The sequence spans 367 residues: UDP-N-acetylglucosamine--N-acetylmuramyl-(pentapeptide) pyrophosphoryl-undecaprenol N-acetylglucosamine transferase (367 aa).

UDP-N-acetyl-alpha-D-glucosamine contacts are provided by residues 15–17 (TGG), asparagine 127, arginine 163, serine 191, isoleucine 249, and glutamine 294.

The protein belongs to the glycosyltransferase 28 family. MurG subfamily.

The protein localises to the cell inner membrane. The catalysed reaction is di-trans,octa-cis-undecaprenyl diphospho-N-acetyl-alpha-D-muramoyl-L-alanyl-D-glutamyl-meso-2,6-diaminopimeloyl-D-alanyl-D-alanine + UDP-N-acetyl-alpha-D-glucosamine = di-trans,octa-cis-undecaprenyl diphospho-[N-acetyl-alpha-D-glucosaminyl-(1-&gt;4)]-N-acetyl-alpha-D-muramoyl-L-alanyl-D-glutamyl-meso-2,6-diaminopimeloyl-D-alanyl-D-alanine + UDP + H(+). It functions in the pathway cell wall biogenesis; peptidoglycan biosynthesis. Functionally, cell wall formation. Catalyzes the transfer of a GlcNAc subunit on undecaprenyl-pyrophosphoryl-MurNAc-pentapeptide (lipid intermediate I) to form undecaprenyl-pyrophosphoryl-MurNAc-(pentapeptide)GlcNAc (lipid intermediate II). The protein is UDP-N-acetylglucosamine--N-acetylmuramyl-(pentapeptide) pyrophosphoryl-undecaprenol N-acetylglucosamine transferase of Burkholderia pseudomallei (strain 1106a).